A 174-amino-acid chain; its full sequence is Large ribosomal subunit protein uL10 (174 aa).

This sequence belongs to the universal ribosomal protein uL10 family. As to quaternary structure, part of the ribosomal stalk of the 50S ribosomal subunit. The N-terminus interacts with L11 and the large rRNA to form the base of the stalk. The C-terminus forms an elongated spine to which L12 dimers bind in a sequential fashion forming a multimeric L10(L12)X complex.

Its function is as follows. Forms part of the ribosomal stalk, playing a central role in the interaction of the ribosome with GTP-bound translation factors. The protein is Large ribosomal subunit protein uL10 of Pelobacter propionicus (strain DSM 2379 / NBRC 103807 / OttBd1).